The primary structure comprises 406 residues: Multidrug resistance protein MdtG (406 aa).

11 helical membrane-spanning segments follow: residues 16 to 36 (VAWLGCFLTGAAFSLVMPFLP), 56 to 76 (LVFSITFLFSAIASPFWGGLA), 90 to 110 (LGMAIVMLLMGLAQNIWQFLL), 113 to 133 (ALLGLLGGFVPNANALIATQV), 144 to 164 (TLSTGGVSGALLGPLAGGLLA), 171 to 191 (PVFFITASVLLVCFLLTLFFT), 222 to 242 (LFVTTLIIQVATGSIAPILTL), 254 to 274 (IAFISGMIASVPGVAALLSAP), 288 to 308 (ILITALIISVLLLIPMSFVQT), 317 to 337 (FLLGAADGALLPAVQTLLVYN), and 376 to 396 (AVFCVTAGVVLFNAIYSWNSL).

This sequence belongs to the major facilitator superfamily. DHA1 family. MdtG (TC 2.A.1.2.20) subfamily.

It localises to the cell inner membrane. The chain is Multidrug resistance protein MdtG from Citrobacter koseri (strain ATCC BAA-895 / CDC 4225-83 / SGSC4696).